A 367-amino-acid polypeptide reads, in one-letter code: RNA-binding protein 48 (367 aa).

Residues 46 to 124 (QYLLIQGVPA…GLLHVCYAPE (79 aa)) enclose the RRM domain. Positions 217 to 228 (PVDRASDSSKDG) are enriched in basic and acidic residues. Disordered regions lie at residues 217–243 (PVDR…HNGS), 277–303 (RTTQ…TNPS), and 339–367 (EVIS…RRRI). Basic and acidic residues predominate over residues 347–356 (PPEDKPEDVN).

It belongs to the RBM48 family. Component of the minor spliceosome. Within this complex, interacts with ARMC7 and PRPF8/PRP8.

Its function is as follows. As a component of the minor spliceosome, involved in the splicing of U12-type introns in pre-mRNAs. This Pongo abelii (Sumatran orangutan) protein is RNA-binding protein 48 (RBM48).